A 359-amino-acid polypeptide reads, in one-letter code: Peptide chain release factor 1 (359 aa).

N5-methylglutamine is present on glutamine 235. A disordered region spans residues 287–312 (AQEASAMRSAQVGSGDRSERIRTYNF).

The protein belongs to the prokaryotic/mitochondrial release factor family. In terms of processing, methylated by PrmC. Methylation increases the termination efficiency of RF1.

It is found in the cytoplasm. Functionally, peptide chain release factor 1 directs the termination of translation in response to the peptide chain termination codons UAG and UAA. This chain is Peptide chain release factor 1, found in Chlamydia trachomatis serovar A (strain ATCC VR-571B / DSM 19440 / HAR-13).